We begin with the raw amino-acid sequence, 290 residues long: MDIEAYFERIGYQSTRSKLDLKTLTEILQHQIRAIPFENLNIHCGESMELSLEAIFDQIVRKKRGGWCLQVNHLLYWALTKLGFETTMLGGYVFNTPANKYSSGMIHLLVQVTISGKDYIVDAGFGRSYQMWEPLELTSGKDQPQVPAIFRLTEENGTWYLDQIRREQYVPNQEFINSDLLEKNKYRKIYSFTLEPRTIEDFESMNTYLQTSPASVFTSKSFCSLQTPEGVHCLVGSTLTYRRFSYKDNVDLVEFKSLTEEEIEDVLRTIFGVSLERKLVPKHGDRFFTI.

Cys68 acts as the Acyl-thioester intermediate in catalysis. 2 residues coordinate CoA: Ser103 and Gly104. 106–107 (IH) contributes to the substrate binding site. Active-site residues include His107 and Asp122. CoA is bound at residue Tyr208.

Belongs to the arylamine N-acetyltransferase family.

Its subcellular location is the cytoplasm. It catalyses the reaction an arylamine + acetyl-CoA = an N-acetylarylamine + CoA. The enzyme catalyses an N-hydroxyarylamine + acetyl-CoA = an N-acetoxyarylamine + CoA. In terms of biological role, catalyzes the N- or O-acetylation of various arylamine and heterocyclic amine substrates, and participates in the detoxification of a plethora of hydrazine and arylamine drugs. In Mus musculus (Mouse), this protein is Arylamine N-acetyltransferase 2 (Nat2).